A 361-amino-acid polypeptide reads, in one-letter code: Deoxyribonuclease (361 aa).

Residues 1-24 (MMHLLRRGAFAILLIVLLPSAALA) form the signal peptide. Residue histidine 149 is part of the active site.

This sequence belongs to the DNase I family. The cofactor is Mg(2+). Ca(2+) is required as a cofactor.

The protein localises to the secreted. In terms of biological role, DNA nuclease able to digest short and long DNA substrate. Is resistant to ionic strength and thus active at high salt concentration. The protein is Deoxyribonuclease of Thioalkalivibrio sp. (strain K90mix).